The primary structure comprises 281 residues: MKARKSQRKAGSKPNLIQSKLQVNNGSKSNKIVKCDKCEMSYSSTSIEDRAIHEKYHTLQLHGRKWSPNWGSIVYTERNHSRTVHLSRSTGTITPLNSSPLKKSSPSITHQEEKIVYVRPDKSNGEVRAMTEIMTLVNNELNAPHDENVIWNSTTEEKGKAFVYIRNDRAVGIIIIENLYGGNGKTSSRGRWMVYDSRRLVQNVYPDFKIGISRIWVCRTARKLGIATKLIDVARENIVYGEVIPRYQVAWSQPTDSGGKLASKYNGIMHKSGKLLLPVYI.

Residues 33–57 (VKCDKCEMSYSSTSIEDRAIHEKYH) form a CCHH-type zinc finger. A disordered region spans residues 86-105 (LSRSTGTITPLNSSPLKKSS). A compositionally biased stretch (low complexity) spans 95–105 (PLNSSPLKKSS). The residue at position 223 (Lys-223) is an N6-acetyllysine; by autocatalysis.

Belongs to the acetyltransferase family. ECO subfamily. As to quaternary structure, binds specifically to CHL12, RFC1, RFC2, RFC3, RFC4, RFC5 and RAD24 when members of an RFC complex. Interacts with CHL1 and MPS3. Post-translationally, autoacetylates in vitro.

The protein localises to the nucleus. In terms of biological role, required for establishment of sister chromatid cohesion during S phase but not for its further maintenance during G2 or M phases or for loading the cohesin complex onto DNA. Interacts with the three known alternate replication factor C (RFC) complexes, suggesting that these complexes have essential but redundant activity in cohesion establishment. Acts by acetylating the cohesin complex component SMC3. In vitro, possesses acetyltransferase activity where it can acetylate itself and components of the cohesin complex (MCD1, IRR1 and PDS5), but is unable to acetylate histones. This chain is N-acetyltransferase ECO1 (ECO1), found in Saccharomyces cerevisiae (strain ATCC 204508 / S288c) (Baker's yeast).